We begin with the raw amino-acid sequence, 78 residues long: uncharacterized protein (78 aa).

This is an uncharacterized protein from Escherichia coli O6:H1 (strain CFT073 / ATCC 700928 / UPEC).